We begin with the raw amino-acid sequence, 264 residues long: S-adenosylmethionine decarboxylase proenzyme (264 aa).

Ser113 acts as the Schiff-base intermediate with substrate; via pyruvic acid in catalysis. The residue at position 113 (Ser113) is a Pyruvic acid (Ser); by autocatalysis. Residue His118 is the Proton acceptor; for processing activity of the active site. The active-site Proton donor; for catalytic activity is Cys141.

Belongs to the prokaryotic AdoMetDC family. Type 2 subfamily. As to quaternary structure, heterooctamer of four alpha and four beta chains arranged as a tetramer of alpha/beta heterodimers. It depends on pyruvate as a cofactor. Is synthesized initially as an inactive proenzyme. Formation of the active enzyme involves a self-maturation process in which the active site pyruvoyl group is generated from an internal serine residue via an autocatalytic post-translational modification. Two non-identical subunits are generated from the proenzyme in this reaction, and the pyruvate is formed at the N-terminus of the alpha chain, which is derived from the carboxyl end of the proenzyme. The post-translation cleavage follows an unusual pathway, termed non-hydrolytic serinolysis, in which the side chain hydroxyl group of the serine supplies its oxygen atom to form the C-terminus of the beta chain, while the remainder of the serine residue undergoes an oxidative deamination to produce ammonia and the pyruvoyl group blocking the N-terminus of the alpha chain.

It catalyses the reaction S-adenosyl-L-methionine + H(+) = S-adenosyl 3-(methylsulfanyl)propylamine + CO2. Its pathway is amine and polyamine biosynthesis; S-adenosylmethioninamine biosynthesis; S-adenosylmethioninamine from S-adenosyl-L-methionine: step 1/1. Catalyzes the decarboxylation of S-adenosylmethionine to S-adenosylmethioninamine (dcAdoMet), the propylamine donor required for the synthesis of the polyamines spermine and spermidine from the diamine putrescine. The protein is S-adenosylmethionine decarboxylase proenzyme of Stenotrophomonas maltophilia (strain K279a).